The following is a 686-amino-acid chain: Alpha-amylase 1 (686 aa).

The active-site Nucleophile is the E125. D216 serves as the catalytic Proton donor.

Belongs to the glycosyl hydrolase 57 family.

It is found in the cytoplasm. The catalysed reaction is Endohydrolysis of (1-&gt;4)-alpha-D-glucosidic linkages in polysaccharides containing three or more (1-&gt;4)-alpha-linked D-glucose units.. Its function is as follows. This amylase is a highly liquefying-type: oligomers appeared at the beginning of incubation, followed by a graded decrease in the amounts of maltotriose, maltose and glucose in prolonged incubation. In Dictyoglomus thermophilum (strain ATCC 35947 / DSM 3960 / H-6-12), this protein is Alpha-amylase 1 (amyA).